The following is a 1352-amino-acid chain: Spike glycoprotein (1352 aa).

The first 12 residues, 1–12 (MTLLMCLLMSLL), serve as a signal peptide directing secretion. The Extracellular portion of the chain corresponds to 13–1297 (IFVRGCDSQF…GNYTYYNKWP (1285 aa)). Residues 21–356 (QFVDMSPASN…DDLSQLHCSY (336 aa)) enclose the BetaCoV S1-NTD domain. 8 N-linked (GlcNAc...) asparagine; by host glycosylation sites follow: N30, N71, N111, N132, N162, N172, N227, and N241. Intrachain disulfides connect C191/C242 and C344/C354. An N-linked (GlcNAc...) asparagine; by host glycan is attached at N384. The BetaCoV S1-CTD domain maps to 386–592 (TECDFSPMLT…GTGTDSVCPM (207 aa)). An intrachain disulfide couples C388 to C412. Residue N415 is glycosylated (N-linked (GlcNAc...) asparagine; by host). Cystine bridges form between C430-C483 and C442-C590. N492, N624, N723, N762, N773, N784, and N869 each carry an N-linked (GlcNAc...) asparagine; by host glycan. Fusion peptide stretches follow at residues 887-908 (SAIE…MQGY) and 906-928 (QGYD…AQYV). The cysteines at positions 911 and 924 are disulfide-linked. The interval 993–1043 (QKLIANKFNQALGAMQTGFTTSNLAFSKVQDAVNANAQALSKLASELSNTF) is heptad repeat 1. The stretch at 1022–1066 (QDAVNANAQALSKLASELSNTFGAISSSISDILARLDTVEQDAQI) forms a coiled coil. 8 N-linked (GlcNAc...) asparagine; by host glycosylation sites follow: N1144, N1147, N1174, N1226, N1242, N1257, N1278, and N1289. The heptad repeat 2 stretch occupies residues 1247-1286 (GPNFAEISKINTTLLDLSDEMAMLQEVVKQLNDSYIDLKE). Residues 1259-1287 (TLLDLSDEMAMLQEVVKQLNDSYIDLKEL) are a coiled coil. Residues 1298–1318 (WYVWLGFIAGLVALLLCVFFL) traverse the membrane as a helical segment. Residues 1319-1352 (LCCTGCGTSCLGKMKCKNCCDSYEEYDVEKIHVH) are Cytoplasmic-facing. The KxHxx motif lies at 1350–1352 (HVH).

It belongs to the betacoronaviruses spike protein family. In terms of assembly, homotrimer; each monomer consists of a S1 and a S2 subunit. The resulting peplomers protrude from the virus surface as spikes. In terms of processing, specific enzymatic cleavages in vivo yield mature proteins. The precursor is processed into S1 and S2 by host cell furin or another cellular protease to yield the mature S1 and S2 proteins. Additionally, a second cleavage leads to the release of a fusion peptide after viral attachment to host cell receptor. The cytoplasmic Cys-rich domain is palmitoylated. Spike glycoprotein is digested within host endosomes.

It is found in the virion membrane. The protein resides in the host endoplasmic reticulum-Golgi intermediate compartment membrane. Its subcellular location is the host cell membrane. Attaches the virion to the cell membrane by interacting with host receptor, initiating the infection. Functionally, mediates fusion of the virion and cellular membranes by acting as a class I viral fusion protein. Under the current model, the protein has at least three conformational states: pre-fusion native state, pre-hairpin intermediate state, and post-fusion hairpin state. During viral and target cell membrane fusion, the coiled coil regions (heptad repeats) assume a trimer-of-hairpins structure, positioning the fusion peptide in close proximity to the C-terminal region of the ectodomain. The formation of this structure appears to drive apposition and subsequent fusion of viral and target cell membranes. Its function is as follows. Acts as a viral fusion peptide which is unmasked following S2 cleavage occurring upon virus endocytosis. The polypeptide is Spike glycoprotein (Bat coronavirus HKU4 (BtCoV)).